Reading from the N-terminus, the 149-residue chain is Flagellar assembly factor FliW (149 aa).

It belongs to the FliW family. As to quaternary structure, interacts with translational regulator CsrA and flagellin(s).

It localises to the cytoplasm. Its function is as follows. Acts as an anti-CsrA protein, binds CsrA and prevents it from repressing translation of its target genes, one of which is flagellin. Binds to flagellin and participates in the assembly of the flagellum. This is Flagellar assembly factor FliW from Thermotoga petrophila (strain ATCC BAA-488 / DSM 13995 / JCM 10881 / RKU-1).